The sequence spans 189 residues: Peptidyl-tRNA hydrolase (189 aa).

Residue Tyr-14 coordinates tRNA. His-19 acts as the Proton acceptor in catalysis. Positions 64, 66, and 112 each coordinate tRNA.

This sequence belongs to the PTH family. Monomer.

Its subcellular location is the cytoplasm. The catalysed reaction is an N-acyl-L-alpha-aminoacyl-tRNA + H2O = an N-acyl-L-amino acid + a tRNA + H(+). Functionally, hydrolyzes ribosome-free peptidyl-tRNAs (with 1 or more amino acids incorporated), which drop off the ribosome during protein synthesis, or as a result of ribosome stalling. Its function is as follows. Catalyzes the release of premature peptidyl moieties from peptidyl-tRNA molecules trapped in stalled 50S ribosomal subunits, and thus maintains levels of free tRNAs and 50S ribosomes. In Sphingopyxis alaskensis (strain DSM 13593 / LMG 18877 / RB2256) (Sphingomonas alaskensis), this protein is Peptidyl-tRNA hydrolase.